Reading from the N-terminus, the 195-residue chain is Cytochrome c oxidase assembly protein CtaG (195 aa).

Over 1–7 the chain is Cytoplasmic; the sequence is MSGGKPR. The helical; Signal-anchor for type II membrane protein transmembrane segment at 8–30 threads the bilayer; it reads SNTRTVAMLAGVVVLMGALSWAA. Residues 31–195 lie on the Periplasmic side of the membrane; sequence VPFYSWFCKV…LDAKTEPTVN (165 aa).

The protein belongs to the COX11/CtaG family.

It localises to the cell inner membrane. Exerts its effect at some terminal stage of cytochrome c oxidase synthesis, probably by being involved in the insertion of the copper B into subunit I. The chain is Cytochrome c oxidase assembly protein CtaG from Paracoccus denitrificans (strain Pd 1222).